A 293-amino-acid chain; its full sequence is Pyridoxal 5'-phosphate synthase subunit PdxS (293 aa).

Asp-25 lines the D-ribose 5-phosphate pocket. Lys-82 serves as the catalytic Schiff-base intermediate with D-ribose 5-phosphate. Asp-103 is a D-ribulose 5-phosphate binding site. Gly-154 serves as a coordination point for D-ribose 5-phosphate. Arg-166 serves as a coordination point for D-glyceraldehyde 3-phosphate. Residues Gly-215 and 236–237 (GS) contribute to the D-ribose 5-phosphate site.

It belongs to the PdxS/SNZ family. As to quaternary structure, homohexamer and homododecamer. In the presence of PdxT, forms a dodecamer of heterodimers.

It carries out the reaction aldehydo-D-ribose 5-phosphate + D-glyceraldehyde 3-phosphate + L-glutamine = pyridoxal 5'-phosphate + L-glutamate + phosphate + 3 H2O + H(+). Its pathway is cofactor biosynthesis; pyridoxal 5'-phosphate biosynthesis. Functionally, catalyzes the formation of pyridoxal 5'-phosphate from ribose 5-phosphate (RBP), glyceraldehyde 3-phosphate (G3P) and ammonia. The ammonia is provided by the PdxT subunit. Can also use ribulose 5-phosphate and dihydroxyacetone phosphate as substrates, resulting from enzyme-catalyzed isomerization of RBP and G3P, respectively. The chain is Pyridoxal 5'-phosphate synthase subunit PdxS from Thermotoga maritima (strain ATCC 43589 / DSM 3109 / JCM 10099 / NBRC 100826 / MSB8).